Consider the following 392-residue polypeptide: Large ribosomal subunit protein uL3 (392 aa).

This sequence belongs to the universal ribosomal protein uL3 family.

It is found in the cytoplasm. In terms of biological role, the L3 protein is a component of the large subunit of cytoplasmic ribosomes. This Aspergillus fumigatus (strain ATCC MYA-4609 / CBS 101355 / FGSC A1100 / Af293) (Neosartorya fumigata) protein is Large ribosomal subunit protein uL3 (rpl3).